The primary structure comprises 329 residues: Glycerol-3-phosphate dehydrogenase [NAD(P)+] (329 aa).

Residues Tyr14, Arg34, and Lys108 each contribute to the NADPH site. Sn-glycerol 3-phosphate is bound by residues Lys108, Gly137, and Ser139. Ala141 contributes to the NADPH binding site. The sn-glycerol 3-phosphate site is built by Lys192, Asp245, Ser255, Arg256, and Asn257. Lys192 (proton acceptor) is an active-site residue. Residue Arg256 coordinates NADPH. Ile280 and Glu282 together coordinate NADPH.

Belongs to the NAD-dependent glycerol-3-phosphate dehydrogenase family.

It localises to the cytoplasm. It catalyses the reaction sn-glycerol 3-phosphate + NAD(+) = dihydroxyacetone phosphate + NADH + H(+). It carries out the reaction sn-glycerol 3-phosphate + NADP(+) = dihydroxyacetone phosphate + NADPH + H(+). Its pathway is membrane lipid metabolism; glycerophospholipid metabolism. Catalyzes the reduction of the glycolytic intermediate dihydroxyacetone phosphate (DHAP) to sn-glycerol 3-phosphate (G3P), the key precursor for phospholipid synthesis. This chain is Glycerol-3-phosphate dehydrogenase [NAD(P)+], found in Wigglesworthia glossinidia brevipalpis.